A 782-amino-acid chain; its full sequence is Fibrinogen alpha chain (782 aa).

The first 19 residues, 1–19 (MLSLRVACLILSLASTVWT), serve as a signal peptide directing secretion. Residues 68 to 547 (GCRMKGLIDE…KRGRARTMRD (480 aa)) are a coiled coil. Basic and acidic residues predominate over residues 264 to 283 (RPGKDGASRGDLPGDSRGDS). Residues 264-374 (RPGKDGASRG…PATRKEYHTG (111 aa)) are disordered. A Phosphoserine modification is found at Ser-279. The segment covering 311-323 (SGSGSDGNWGSGT) has biased composition (gly residues). Composition is skewed to low complexity over residues 324–344 (TGSD…SGSG) and 354–364 (GEFSEFGGSSS). Phosphoserine is present on Ser-326. Cys-404 and Cys-434 are oxidised to a cystine. Ser-470 is subject to Phosphoserine. A 4-hydroxyproline; by P4HA1 modification is found at Pro-499. The span at 522 to 536 (DEAASEAHQEGDTRT) shows a compositional bias: basic and acidic residues. A disordered region spans residues 522–542 (DEAASEAHQEGDTRTTKRGRA). Ser-526 carries the post-translational modification Phosphoserine. Positions 539-780 (RGRARTMRDC…AVRMKIRPLV (242 aa)) constitute a Fibrinogen C-terminal domain. Asn-602 is a glycosylation site (N-linked (GlcNAc...) asparagine). Residues Asp-707, Asp-709, Trp-711, and Glu-713 each contribute to the Ca(2+) site. Residues Cys-715 and Cys-728 are joined by a disulfide bond.

As to quaternary structure, heterohexamer; disulfide linked. Contains 2 sets of 3 non-identical chains (alpha, beta and gamma). The 2 heterotrimers are in head to head conformation with the N-termini in a small central domain. Conversion of fibrinogen to fibrin is triggered by thrombin, which cleaves fibrinopeptides A and B from alpha and beta chains, and thus exposes the N-terminal polymerization sites responsible for the formation of the soft clot. The soft clot is converted into the hard clot by factor XIIIA which catalyzes the epsilon-(gamma-glutamyl)lysine cross-linking between gamma chains (stronger) and between alpha chains (weaker) of different monomers. Post-translationally, forms F13A-mediated cross-links between a glutamine and the epsilon-amino group of a lysine residue, forming fibronectin-fibrinogen heteropolymers. In terms of processing, phosphorylated by FAM20C in the extracellular medium.

It localises to the secreted. Cleaved by the protease thrombin to yield monomers which, together with fibrinogen beta (FGB) and fibrinogen gamma (FGG), polymerize to form an insoluble fibrin matrix. Fibrin has a major function in hemostasis as one of the primary components of blood clots. In addition, functions during the early stages of wound repair to stabilize the lesion and guide cell migration during re-epithelialization. Was originally thought to be essential for platelet aggregation, based on in vitro studies using anticoagulated blood. However, subsequent studies have shown that it is not absolutely required for thrombus formation in vivo. Enhances expression of SELP in activated platelets via an ITGB3-dependent pathway. Maternal fibrinogen is essential for successful pregnancy. Fibrin deposition is also associated with infection, where it protects against IFNG-mediated hemorrhage. May also facilitate the immune response via both innate and T-cell mediated pathways. The chain is Fibrinogen alpha chain (Fga) from Rattus norvegicus (Rat).